The following is a 115-amino-acid chain: Large ribosomal subunit protein bL19 (115 aa).

This sequence belongs to the bacterial ribosomal protein bL19 family.

In terms of biological role, this protein is located at the 30S-50S ribosomal subunit interface and may play a role in the structure and function of the aminoacyl-tRNA binding site. This chain is Large ribosomal subunit protein bL19, found in Streptococcus gordonii (strain Challis / ATCC 35105 / BCRC 15272 / CH1 / DL1 / V288).